We begin with the raw amino-acid sequence, 71 residues long: Beta-defensin 124 (71 aa).

The signal sequence occupies residues 1-22; the sequence is MTQLLLFLVALLVLGHVPSGRS. 3 cysteine pairs are disulfide-bonded: C27-C54, C34-C48, and C38-C55.

Belongs to the beta-defensin family.

The protein resides in the secreted. Has antibacterial activity. This is Beta-defensin 124 (DEFB124) from Homo sapiens (Human).